Consider the following 422-residue polypeptide: 3-phosphoshikimate 1-carboxyvinyltransferase (422 aa).

Residues Lys20, Ser21, and Arg25 each contribute to the 3-phosphoshikimate site. Lys20 is a phosphoenolpyruvate binding site. The phosphoenolpyruvate site is built by Gly90 and Arg118. 3-phosphoshikimate-binding residues include Ser161, Ser162, Gln163, Ser189, Asp305, and Lys332. Gln163 is a binding site for phosphoenolpyruvate. Catalysis depends on Asp305, which acts as the Proton acceptor. Phosphoenolpyruvate is bound by residues Arg336 and Arg378.

The protein belongs to the EPSP synthase family. Monomer.

It localises to the cytoplasm. The catalysed reaction is 3-phosphoshikimate + phosphoenolpyruvate = 5-O-(1-carboxyvinyl)-3-phosphoshikimate + phosphate. It functions in the pathway metabolic intermediate biosynthesis; chorismate biosynthesis. In terms of biological role, catalyzes the transfer of the enolpyruvyl moiety of phosphoenolpyruvate (PEP) to the 5-hydroxyl of shikimate-3-phosphate (S3P) to produce enolpyruvyl shikimate-3-phosphate and inorganic phosphate. The chain is 3-phosphoshikimate 1-carboxyvinyltransferase from Nitrosopumilus maritimus (strain SCM1).